The sequence spans 210 residues: Small ribosomal subunit protein uS3 (210 aa).

In terms of domain architecture, KH type-2 spans 38–106 (IRQFLKKRLY…EVFININEVR (69 aa)).

It belongs to the universal ribosomal protein uS3 family. In terms of assembly, part of the 30S ribosomal subunit. Forms a tight complex with proteins S10 and S14.

Binds the lower part of the 30S subunit head. Binds mRNA in the 70S ribosome, positioning it for translation. The polypeptide is Small ribosomal subunit protein uS3 (Trichlorobacter lovleyi (strain ATCC BAA-1151 / DSM 17278 / SZ) (Geobacter lovleyi)).